The chain runs to 221 residues: MWSAGSGRAAGPALLGILLALSLSGGRAAKSDAGLVTCGSVLKLFNTQHRVRLHSHDIKYGSGSGQQSVTGVEASDDANSYWRIRGGTEGECPRGSPVRCGQAVRLTHVLTGKNLHTHHFPSPLTNNQEVSAFGEDGEGDDLDLWTVRCSGQHWEREAAVRFQHVGTSVFLSVTGEQYGSPIRGQHEVHGMASASAHNKWKAMEGIFIKPSPEAPGGHDEL.

An N-terminal signal peptide occupies residues 1–28 (MWSAGSGRAAGPALLGILLALSLSGGRA). 3 MIR domains span residues 33 to 87 (AGLV…IRGG), 95 to 150 (GSPV…VRCS), and 151 to 205 (GQHW…AMEG). The Prevents secretion from ER signature appears at 218 to 221 (HDEL).

The protein localises to the endoplasmic reticulum lumen. This Bos taurus (Bovine) protein is Stromal cell-derived factor 2-like protein 1 (SDF2L1).